Reading from the N-terminus, the 313-residue chain is Protoheme IX farnesyltransferase (313 aa).

9 helical membrane passes run 22 to 42, 46 to 66, 98 to 118, 121 to 141, 150 to 170, 177 to 197, 223 to 243, 246 to 266, and 284 to 304; these read FALL…VGLM, IGVH…GGGA, GEAL…LALA, VFAG…YTMW, IVIG…AATG, WLMF…LALF, ILVY…TSVG, IYLT…VQIW, and FFKL…AEAL.

This sequence belongs to the UbiA prenyltransferase family. Protoheme IX farnesyltransferase subfamily. In terms of assembly, interacts with CtaA.

It is found in the cell inner membrane. The enzyme catalyses heme b + (2E,6E)-farnesyl diphosphate + H2O = Fe(II)-heme o + diphosphate. It functions in the pathway porphyrin-containing compound metabolism; heme O biosynthesis; heme O from protoheme: step 1/1. Converts heme B (protoheme IX) to heme O by substitution of the vinyl group on carbon 2 of heme B porphyrin ring with a hydroxyethyl farnesyl side group. The sequence is that of Protoheme IX farnesyltransferase from Ruegeria sp. (strain TM1040) (Silicibacter sp.).